A 662-amino-acid polypeptide reads, in one-letter code: A-kinase anchor protein 10, mitochondrial (662 aa).

Residues 1–28 constitute a mitochondrion transit peptide; that stretch reads MRGAGPSPRQSPRTLRPDPGPAMSFFRR. The segment at 1–55 is disordered; sequence MRGAGPSPRQSPRTLRPDPGPAMSFFRRKVKGKEQEKTSDVKSIKASISVHSPQK. Residues 32 to 43 show a composition bias toward basic and acidic residues; sequence GKEQEKTSDVKS. Phosphoserine is present on residues Ser-52 and Ser-189. RGS domains lie at 125-369 and 379-505; these read TLEQ…CKYQ and YLAD…YKYL. The span at 261–280 shows a compositional bias: polar residues; it reads SMETQESSSTLTVASRNSPA. Positions 261–282 are disordered; that stretch reads SMETQESSSTLTVASRNSPASP. Ser-281 carries the phosphoserine modification. The interval 524–548 is disordered; it reads LTAPGSVGPPDESHPGSSDSSASQS. The PKA-RII subunit binding stretch occupies residues 634–647; it reads LAWKIAKMIVSDIM.

The protein localises to the mitochondrion. It is found in the membrane. Its subcellular location is the cytoplasm. Its function is as follows. Differentially targeted protein that binds to type I and II regulatory subunits of protein kinase A and anchors them to the mitochondria or the plasma membrane. Although the physiological relevance between PKA and AKAPS with mitochondria is not fully understood, one idea is that BAD, a proapoptotic member, is phosphorylated and inactivated by mitochondria-anchored PKA. It cannot be excluded too that it may facilitate PKA as well as G protein signal transduction, by acting as an adapter for assembling multiprotein complexes. With its RGS domain, it could lead to the interaction to G-alpha proteins, providing a link between the signaling machinery and the downstream kinase. This Homo sapiens (Human) protein is A-kinase anchor protein 10, mitochondrial (AKAP10).